The following is a 114-amino-acid chain: Ribonuclease P protein component (114 aa).

It belongs to the RnpA family. In terms of assembly, consists of a catalytic RNA component (M1 or rnpB) and a protein subunit.

It carries out the reaction Endonucleolytic cleavage of RNA, removing 5'-extranucleotides from tRNA precursor.. RNaseP catalyzes the removal of the 5'-leader sequence from pre-tRNA to produce the mature 5'-terminus. It can also cleave other RNA substrates such as 4.5S RNA. The protein component plays an auxiliary but essential role in vivo by binding to the 5'-leader sequence and broadening the substrate specificity of the ribozyme. The polypeptide is Ribonuclease P protein component (Limosilactobacillus fermentum (strain NBRC 3956 / LMG 18251) (Lactobacillus fermentum)).